A 348-amino-acid chain; its full sequence is Protein RecA (348 aa).

An ATP-binding site is contributed by 66–73 (GPESSGKT).

This sequence belongs to the RecA family.

The protein localises to the cytoplasm. In terms of biological role, can catalyze the hydrolysis of ATP in the presence of single-stranded DNA, the ATP-dependent uptake of single-stranded DNA by duplex DNA, and the ATP-dependent hybridization of homologous single-stranded DNAs. It interacts with LexA causing its activation and leading to its autocatalytic cleavage. The sequence is that of Protein RecA from Legionella pneumophila (strain Lens).